The chain runs to 234 residues: Carboxy-S-adenosyl-L-methionine synthase (234 aa).

S-adenosyl-L-methionine contacts are provided by residues Tyr35, 60–62, 109–110, Asn124, and Arg191; these read GCS and DI.

This sequence belongs to the class I-like SAM-binding methyltransferase superfamily. Cx-SAM synthase family. In terms of assembly, homodimer.

The catalysed reaction is prephenate + S-adenosyl-L-methionine = carboxy-S-adenosyl-L-methionine + 3-phenylpyruvate + H2O. Its function is as follows. Catalyzes the conversion of S-adenosyl-L-methionine (SAM) to carboxy-S-adenosyl-L-methionine (Cx-SAM). The sequence is that of Carboxy-S-adenosyl-L-methionine synthase from Campylobacter fetus subsp. fetus (strain 82-40).